A 140-amino-acid polypeptide reads, in one-letter code: Ubiquitin-like protein ATG12 (140 aa).

Positions 1 to 52 (MAEEPQTVLQLPPSSAAGGEGLTDVSPETTTPEPPSSAAVSPGTEEPAGDTK) are disordered. The segment covering 25–42 (VSPETTTPEPPSSAAVSP) has biased composition (low complexity). A Glycyl lysine isopeptide (Gly-Lys) (interchain with K-? in acceptor protein) cross-link involves residue glycine 140.

The protein belongs to the ATG12 family. In terms of assembly, forms a conjugate with ATG5. Part of the minor complex composed of 4 sets of ATG12-ATG5 and ATG16L1 (400 kDa); this complex interacts with ATG3 leading to disruption of ATG7 interaction and promotion of ATG8-like proteins lipidation. Forms an 800-kDa complex composed of ATG12-ATG5 and ATG16L2. Interacts with DHX58/RIG-1, IFIH1/MDA5 and MAVS/IPS-1 in monomeric form as well as in ATG12-ATG5 conjugate. The interaction with MAVS is further enhanced upon vesicular stomatitis virus (VSV) infection. Interacts with ATG3; this interaction is essential for phosphatidylethanolamine (PE)-conjugated ATG8-like proteins formation. Interacts with ATG7. Interacts with ATG10. Interacts with TECPR1. Interacts with SH3BGRL. The ATG12-ATG5 conjugate interacts with PDCD6IP (via the BRO1 domain); this interaction is bridged by ATG12 and promotes multiple PDCD6IP-mediated functions such as endolysosomal trafficking, macroautophagy and exosome biogenesis. Post-translationally, acetylated by EP300.

It localises to the cytoplasm. The protein resides in the preautophagosomal structure membrane. Ubiquitin-like protein involved in autophagy vesicles formation. Conjugation with ATG5 through a ubiquitin-like conjugating system involving also ATG7 as an E1-like activating enzyme and ATG10 as an E2-like conjugating enzyme, is essential for its function. The ATG12-ATG5 conjugate acts as an E3-like enzyme which is required for lipidation of ATG8 family proteins and their association to the vesicle membranes. The ATG12-ATG5 conjugate also negatively regulates the innate antiviral immune response by blocking the type I IFN production pathway through direct association with RARRES3 and MAVS. Also plays a role in translation or delivery of incoming viral RNA to the translation apparatus. As part of the ATG8 conjugation system with ATG5 and ATG16L1, required for recruitment of LRRK2 to stressed lysosomes and induction of LRRK2 kinase activity in response to lysosomal stress. The protein is Ubiquitin-like protein ATG12 of Pongo abelii (Sumatran orangutan).